A 342-amino-acid polypeptide reads, in one-letter code: Probable RNA methyltransferase PST_2231 (342 aa).

Residue E91 is the Proton acceptor of the active site. Positions 94–320 constitute a Radical SAM core domain; that stretch reads LLPRDGLCVS…TKVRNSAGQD (227 aa). C101 and C325 are disulfide-bonded. C108, C112, and C115 together coordinate [4Fe-4S] cluster. Residues 153–154, S183, 206–208, and N282 contribute to the S-adenosyl-L-methionine site; these read GE and SLH. C325 (S-methylcysteine intermediate) is an active-site residue.

Belongs to the radical SAM superfamily. RlmN family. The cofactor is [4Fe-4S] cluster.

The protein resides in the cytoplasm. The protein is Probable RNA methyltransferase PST_2231 of Stutzerimonas stutzeri (strain A1501) (Pseudomonas stutzeri).